A 135-amino-acid chain; its full sequence is Basic phospholipase A2 6 (135 aa).

7 disulfides stabilise this stretch: Cys28–Cys87, Cys42–Cys134, Cys44–Cys60, Cys59–Cys115, Cys66–Cys108, Cys76–Cys101, and Cys94–Cys106. Ca(2+) is bound by residues Tyr43, Gly45, and Gly47. Residue His63 is part of the active site. Asp64 provides a ligand contact to Ca(2+). The active site involves Asp109.

Belongs to the phospholipase A2 family. Group I subfamily. D49 sub-subfamily. The cofactor is Ca(2+). Expressed by the venom gland.

Its subcellular location is the secreted. It carries out the reaction a 1,2-diacyl-sn-glycero-3-phosphocholine + H2O = a 1-acyl-sn-glycero-3-phosphocholine + a fatty acid + H(+). Its function is as follows. Snake venom phospholipase A2 (PLA2) that inhibits neuromuscular transmission by blocking acetylcholine release from the nerve termini. PLA2 catalyzes the calcium-dependent hydrolysis of the 2-acyl groups in 3-sn-phosphoglycerides. Very weakly suppress the acetylcholine (ACh)-evoked current mediated by alpha-7-similar nAChRs in L.stagnalis neurons. The sequence is that of Basic phospholipase A2 6 from Bungarus fasciatus (Banded krait).